The following is a 200-amino-acid chain: Probable GTP-binding protein EngB (200 aa).

Residues D22–E197 form the EngB-type G domain. GTP-binding positions include G30–S37, G57–L61, D78–G81, T145–D148, and F176–A178. Mg(2+)-binding residues include S37 and T59.

This sequence belongs to the TRAFAC class TrmE-Era-EngA-EngB-Septin-like GTPase superfamily. EngB GTPase family. Requires Mg(2+) as cofactor.

In terms of biological role, necessary for normal cell division and for the maintenance of normal septation. This is Probable GTP-binding protein EngB from Trichlorobacter lovleyi (strain ATCC BAA-1151 / DSM 17278 / SZ) (Geobacter lovleyi).